We begin with the raw amino-acid sequence, 771 residues long: Myotubularin-related protein 10 (771 aa).

In terms of domain architecture, Myotubularin phosphatase spans 217-657 (FETYSDWDRE…THIKLWKLCY (441 aa)). Phosphoserine is present on residues serine 603 and serine 745.

It belongs to the protein-tyrosine phosphatase family. Non-receptor class myotubularin subfamily.

The polypeptide is Myotubularin-related protein 10 (Mtmr10) (Mus musculus (Mouse)).